The following is a 638-amino-acid chain: ATP-dependent rRNA helicase spb4 (638 aa).

The Q motif signature appears at 14 to 42; sequence WDGVSPSLSEWVLEAVSSMGFTRMTPVQA. One can recognise a Helicase ATP-binding domain in the interval 45–249; the sequence is IPLFMAHKDV…RVGLRNPVKV (205 aa). An ATP-binding site is contributed by 58 to 65; the sequence is AVTGSGKT. The short motif at 197 to 200 is the DEAD box element; it reads DEAD. The Helicase C-terminal domain occupies 283 to 437; it reads ALKHILHSVD…PISFSESEAT (155 aa). Basic and acidic residues-rich tracts occupy residues 534–554 and 577–615; these read LLQE…RKAT and QRRQ…EERR. Residues 534 to 638 form a disordered region; it reads LLQESKEGDG…KDEEEFEGFD (105 aa). A coiled-coil region spans residues 566-619; sequence RNKKQKRREQKQRRQEKNKWEKMTEEERQKIRETEQMVESIRVKNEEERRLRRA.

Belongs to the DEAD box helicase family. DDX55/SPB4 subfamily. As to quaternary structure, component of pre-60S ribosomal complexes.

The protein localises to the nucleus. It localises to the nucleolus. The catalysed reaction is ATP + H2O = ADP + phosphate + H(+). Functionally, ATP-binding RNA helicase involved in the biogenesis of 60S ribosomal subunits. Binds 90S pre-ribosomal particles and dissociates from pre-60S ribosomal particles after processing of 27SB pre-rRNA. Required for the normal formation of 18S rRNA through the processing of pre-rRNAs at sites A0, A1 and A2, and the normal formation of 25S and 5.8S rRNAs through the processing of pre-rRNAs at sites C1 and C2. The polypeptide is ATP-dependent rRNA helicase spb4 (Aspergillus oryzae (strain ATCC 42149 / RIB 40) (Yellow koji mold)).